The primary structure comprises 462 residues: Glycine--tRNA ligase (462 aa).

Substrate is bound by residues arginine 100 and glutamate 175. ATP is bound by residues 207–209 (RNE), 217–222 (FRTREF), 291–292 (EL), and 335–338 (GADR). 222–226 (FEQME) is a substrate binding site. 331-335 (EPSLG) provides a ligand contact to substrate.

It belongs to the class-II aminoacyl-tRNA synthetase family. As to quaternary structure, homodimer.

The protein localises to the cytoplasm. It carries out the reaction tRNA(Gly) + glycine + ATP = glycyl-tRNA(Gly) + AMP + diphosphate. In terms of biological role, catalyzes the attachment of glycine to tRNA(Gly). This is Glycine--tRNA ligase from Clostridium acetobutylicum (strain ATCC 824 / DSM 792 / JCM 1419 / IAM 19013 / LMG 5710 / NBRC 13948 / NRRL B-527 / VKM B-1787 / 2291 / W).